We begin with the raw amino-acid sequence, 286 residues long: Putative type II secretion system L-type protein YghE (286 aa).

A helical membrane pass occupies residues 136–156; sequence VMILPILLILVALAVERGVTL.

It belongs to the GSP L family.

The protein localises to the cell inner membrane. In terms of biological role, involved in a type II secretion system (T2SS, formerly general secretion pathway, GSP) for the export of folded proteins across the outer membrane. The protein is Putative type II secretion system L-type protein YghE of Escherichia coli (strain K12).